The primary structure comprises 37 residues: Large ribosomal subunit protein bL36 (37 aa).

Belongs to the bacterial ribosomal protein bL36 family.

This chain is Large ribosomal subunit protein bL36, found in Synechococcus sp. (strain RCC307).